A 491-amino-acid polypeptide reads, in one-letter code: Serine/threonine-protein kinase 3 (491 aa).

At M1 the chain carries N-acetylmethionine. S15 bears the Phosphoserine mark. Residues 27–278 form the Protein kinase domain; it reads FDVLEKLGEG…ATQLLQHPFI (252 aa). ATP-binding positions include 33–41 and K56; that span reads LGEGSYGSV. T117 bears the Phosphothreonine; by PKB/AKT1 mark. Residue D146 is the Proton acceptor of the active site. Residues N151 and D164 each coordinate Mg(2+). The residue at position 180 (T180) is a Phosphothreonine; by autocatalysis. The stretch at 291–324 forms a coiled coil; sequence ITEGMEIKAKRHEEQQRELEDEEENSDEDELDSH. Disordered regions lie at residues 301-343 and 370-392; these read RHEE…TSTM and EDEE…QRPS. The segment covering 309–321 has biased composition (acidic residues); it reads LEDEEENSDEDEL. S316 is subject to Phosphoserine. Over residues 326–343 the composition is skewed to polar residues; that stretch reads MVKTSSEGVGTMRATSTM. A phosphothreonine mark is found at T336 and T378. Residues 381–390 are compositionally biased toward polar residues; sequence RNATSPQVQR. T384 is subject to Phosphothreonine; by PKB/AKT1. S385 and S444 each carry phosphoserine. Residues 437–484 enclose the SARAH domain; sequence FDFLKNLSLEELQMRLKALDPMMEREIEELHQRYSAKRQPILDAMDAK.

It belongs to the protein kinase superfamily. STE Ser/Thr protein kinase family. STE20 subfamily. Homodimer; mediated via the coiled-coil region. Interacts with NORE1, which inhibits autoactivation. Interacts with and stabilizes SAV1. Interacts with RAF1, which prevents dimerization and phosphorylation. Interacts with RASSF1. Interacts (via SARAH domain) with isoform 1 of NEK2. Interacts with ESR1 only in the presence of SAV1. Interacts with PKB/AKT1. Forms a tripartite complex with MOBKL1B and STK38. Interacts with RASSF2 (via SARAH domain). Interacts with DLG5 (via PDZ domain 3). Interacts with LATS1; this interaction is inhibited in the presence of DLG5. Interacts with MARK3 in the presence of DLG5. Interacts with RASSF5; this interaction inhibits STK3 autoactivation through heterodimerization. Interacts (when phosphorylated) with SLMAP (via FHA domain); the interaction associates STK3 with the STRIPAK complex. Mg(2+) serves as cofactor. Autophosphorylated on two residues Thr-174 and Thr-180, leading to activation. Phosphorylation at Thr-117 and Thr-384 by PKB/AKT1, leads to inhibition of its: cleavage, kinase activity, autophosphorylation at Thr-180, binding to RASSF1 and nuclear translocation, and increase in its binding to RAF1. Phosphorylated at Ser-15 by PLK1, leading to activation. Post-translationally, proteolytically cleaved by caspase-3 during apoptosis. Proteolytic cleavage results in kinase activation and nuclear translocation of the truncated form (MST1/N). In terms of processing, ubiquitinated by TRIM69; leading to its redistribution to the perinuclear cytoskeleton.

Its subcellular location is the cytoplasm. The protein localises to the nucleus. The enzyme catalyses L-seryl-[protein] + ATP = O-phospho-L-seryl-[protein] + ADP + H(+). It carries out the reaction L-threonyl-[protein] + ATP = O-phospho-L-threonyl-[protein] + ADP + H(+). With respect to regulation, inhibited by the C-terminal non-catalytic region. Activated by caspase-cleavage. Full activation also requires homodimerization and autophosphorylation of Thr-180, which are inhibited by the proto-oncogene product RAF1. Activated by RASSF1 which acts by preventing its dephosphorylation. When autophosphorylated at Thr-180, recruits STRIPAK complex and promotes PP2A-mediated dephosphorylation and inactivation of STK3. In terms of biological role, stress-activated, pro-apoptotic kinase which, following caspase-cleavage, enters the nucleus and induces chromatin condensation followed by internucleosomal DNA fragmentation. Key component of the Hippo signaling pathway which plays a pivotal role in organ size control and tumor suppression by restricting proliferation and promoting apoptosis. The core of this pathway is composed of a kinase cascade wherein STK3/MST2 and STK4/MST1, in complex with its regulatory protein SAV1, phosphorylates and activates LATS1/2 in complex with its regulatory protein MOB1, which in turn phosphorylates and inactivates YAP1 oncoprotein and WWTR1/TAZ. Phosphorylation of YAP1 by LATS2 inhibits its translocation into the nucleus to regulate cellular genes important for cell proliferation, cell death, and cell migration. STK3/MST2 and STK4/MST1 are required to repress proliferation of mature hepatocytes, to prevent activation of facultative adult liver stem cells (oval cells), and to inhibit tumor formation. Phosphorylates NKX2-1. Phosphorylates NEK2 and plays a role in centrosome disjunction by regulating the localization of NEK2 to centrosomes, and its ability to phosphorylate CROCC and CEP250. In conjunction with SAV1, activates the transcriptional activity of ESR1 through the modulation of its phosphorylation. Positively regulates RAF1 activation via suppression of the inhibitory phosphorylation of RAF1 on 'Ser-259'. Phosphorylates MOBKL1A and RASSF2. Phosphorylates MOBKL1B on 'Thr-74'. Acts cooperatively with MOBKL1B to activate STK38. The sequence is that of Serine/threonine-protein kinase 3 (Stk3) from Rattus norvegicus (Rat).